The primary structure comprises 136 residues: Large ribosomal subunit protein uL16 (136 aa).

It belongs to the universal ribosomal protein uL16 family. In terms of assembly, part of the 50S ribosomal subunit.

In terms of biological role, binds 23S rRNA and is also seen to make contacts with the A and possibly P site tRNAs. The sequence is that of Large ribosomal subunit protein uL16 from Ehrlichia canis (strain Jake).